We begin with the raw amino-acid sequence, 338 residues long: Aspartate--ammonia ligase (338 aa).

This sequence belongs to the class-II aminoacyl-tRNA synthetase family. AsnA subfamily.

It localises to the cytoplasm. The catalysed reaction is L-aspartate + NH4(+) + ATP = L-asparagine + AMP + diphosphate + H(+). Its pathway is amino-acid biosynthesis; L-asparagine biosynthesis; L-asparagine from L-aspartate (ammonia route): step 1/1. This Lactobacillus delbrueckii subsp. bulgaricus (strain ATCC BAA-365 / Lb-18) protein is Aspartate--ammonia ligase.